Here is a 382-residue protein sequence, read N- to C-terminus: MSKSPVILHLRAETKPLEARAALTPSTTKQLLDAGFEIYVEESSQSTFDIKEYEAVGAKIVPEGSWKTAPKERIIFGLKELPENETFPLIHEHIQFAHCYKDQAGWQDVLKRFPQGNGILYDLEFLENDQGRRVAAFGFYAGFAGAAIGVLDWSFKQLNGNTKGTKGEGEGGELPGVTPYPNENELIKDVKIELEKALTKNGGQYPKCLVIGALGRCGSGAIDLFKKIGIPDDNIAKWDMAETAKGGPFQEIVDSDIFINCIYLSKPIPPFINKEILNNENRKLTTIVDVSADTTNPHNPIPVYEIATVFNEPTVEVKLDKGPKLSVCSIDHLPSLLPREASEFFAKDLMPSLLELPNRDTSPVWVRAKQLFDKHVARLDKE.

Positions 20 and 79 each coordinate L-saccharopine. Lys79 (proton acceptor) is an active-site residue. His98 serves as the catalytic Proton donor. Position 103 (Gln103) interacts with L-saccharopine. Arg132 contacts NAD(+). The L-saccharopine site is built by Arg133 and Phe137. NAD(+)-binding positions include 215-216 (GR), Asp239, Thr243, Tyr263, and Val290. Residues Cys217 and Cys261 are joined by a disulfide bond. L-saccharopine is bound at residue 291-293 (SAD). Residue 330-333 (IDHL) participates in NAD(+) binding.

Belongs to the AlaDH/PNT family. As to quaternary structure, monomer.

The enzyme catalyses L-saccharopine + NAD(+) + H2O = L-lysine + 2-oxoglutarate + NADH + H(+). It functions in the pathway amino-acid biosynthesis; L-lysine biosynthesis via AAA pathway; L-lysine from L-alpha-aminoadipate (fungal route): step 3/3. Functionally, catalyzes the NAD(+)-dependent cleavage of saccharopine to L-lysine and 2-oxoglutarate, the final step in the alpha-aminoadipate (AAA) pathway for lysin biosynthesis. The sequence is that of Saccharopine dehydrogenase [NAD(+), L-lysine-forming] from Candida albicans (strain SC5314 / ATCC MYA-2876) (Yeast).